Reading from the N-terminus, the 258-residue chain is Imidazole glycerol phosphate synthase subunit HisF (258 aa).

Catalysis depends on residues D11 and D130.

This sequence belongs to the HisA/HisF family. In terms of assembly, heterodimer of HisH and HisF.

The protein resides in the cytoplasm. The catalysed reaction is 5-[(5-phospho-1-deoxy-D-ribulos-1-ylimino)methylamino]-1-(5-phospho-beta-D-ribosyl)imidazole-4-carboxamide + L-glutamine = D-erythro-1-(imidazol-4-yl)glycerol 3-phosphate + 5-amino-1-(5-phospho-beta-D-ribosyl)imidazole-4-carboxamide + L-glutamate + H(+). It participates in amino-acid biosynthesis; L-histidine biosynthesis; L-histidine from 5-phospho-alpha-D-ribose 1-diphosphate: step 5/9. IGPS catalyzes the conversion of PRFAR and glutamine to IGP, AICAR and glutamate. The HisF subunit catalyzes the cyclization activity that produces IGP and AICAR from PRFAR using the ammonia provided by the HisH subunit. In Methylobacterium nodulans (strain LMG 21967 / CNCM I-2342 / ORS 2060), this protein is Imidazole glycerol phosphate synthase subunit HisF.